A 67-amino-acid chain; its full sequence is Large ribosomal subunit protein uL29 (67 aa).

It belongs to the universal ribosomal protein uL29 family.

The chain is Large ribosomal subunit protein uL29 (rpmC) from Halalkalibacterium halodurans (strain ATCC BAA-125 / DSM 18197 / FERM 7344 / JCM 9153 / C-125) (Bacillus halodurans).